An 88-amino-acid chain; its full sequence is Probable glutaredoxin ssr2061 (88 aa).

Cys-15 and Cys-18 are joined by a disulfide.

This sequence belongs to the glutaredoxin family.

Its function is as follows. Has a glutathione-disulfide oxidoreductase activity in the presence of NADPH and glutathione reductase. Reduces low molecular weight disulfides and proteins. The protein is Probable glutaredoxin ssr2061 of Synechocystis sp. (strain ATCC 27184 / PCC 6803 / Kazusa).